Here is a 383-residue protein sequence, read N- to C-terminus: Serine protease 23 (383 aa).

Positions 1 to 23 (MAGIPGLLILLLVLLCVFMQVSP) are cleaved as a signal peptide. Asparagine 93 carries an N-linked (GlcNAc...) asparagine glycan. Cysteine 160 and cysteine 176 are disulfide-bonded. Histidine 175 acts as the Charge relay system in catalysis. A glycan (N-linked (GlcNAc...) asparagine) is linked at asparagine 207. Active-site charge relay system residues include aspartate 240 and serine 316.

Belongs to the peptidase S1 family.

The protein resides in the secreted. The polypeptide is Serine protease 23 (Prss23) (Rattus norvegicus (Rat)).